A 575-amino-acid chain; its full sequence is MFGIQDTLGRGPALKDKSLGAEMDSVRSWVRNVGVVDANVAAQSGVALSRAHFEKQPPSNLRKSNFFHFVLALYDRQGQPVEIERTAFVDFVENDKEQGNEKTNNGTHYKLQLLYSNGVRTEQDLYVRLIDSVTKQPIAYEGQNKNPEMCRVLLTHEVMCSRCCEKKSCGNRNETPSDPVIIDRFFLKFFLKCNQNCLKTAGNPRDMRRFQVVLSTTVNVDGHVLAVSDNMFVHNNSKHGRRARRLDPSEATPCIKAISPSEGWTTGGAMVIIIGDNFFDGLQVVFGTMLVWSELITPHAIRVQTPPRHIPGVVEVTLSYKSKQFCKGAPGRFIYTALNEPTIDYGFQRLQKVIPRHPGDPERLAKEMLLKRAADLVEALYGTPHNNQDIILKRAADIAEALYSVPRNPSQIPALSSSPAHSGMMGINSYGSQLGVSISESTQGNNQGYIRNTSSISPRGYSSSSTPQQSNYSTSSNSMNGYSNVPMANLGVPGSPGFLNGSPTGSPYGIMSSSPTVGSSSTSSILPFSSSVFPAVKQKSAFAPVIRPQGSPSPACSSGNGNGFRAMTGLVVPPM.

The tract at residues arginine 62 to asparagine 65 is interaction with DNA. The C5-type zinc finger occupies cysteine 150–cysteine 169. Interaction with DNA stretches follow at residues asparagine 196–asparagine 203 and asparagine 235–lysine 238. An IPT/TIG domain is found at proline 253–threonine 336. A compositionally biased stretch (polar residues) spans serine 441–threonine 453. Positions serine 441–methionine 479 are disordered. Over residues serine 454–methionine 479 the composition is skewed to low complexity.

Belongs to the COE family. In terms of assembly, forms either a homodimer or a heterodimer with a related family member. Interacts with SIX1. In terms of tissue distribution, in adult expressed in olfactory epithelium and at a much lower level in Purkinje cells of the cerebellum. In embryo expressed in epithalamus, in cells near the ventricular zone of mesencephalon and on the ventral surface of rhombencephalon, in the developing vomeronasal organ, at a lower level in developing spinal cord. Not expressed in developing retina, inner ear, dorsal root ganglia, trigeminal ganglia and glossopharyngeal ganglia.

It localises to the nucleus. In terms of biological role, transcription factor that, in osteoblasts, activates the decoy receptor for RANKL, TNFRSF11B, which in turn regulates osteoclast differentiation. Acts in synergy with the Wnt-responsive LEF1/CTNNB1 pathway. Recognizes variations of the palindromic sequence 5'-ATTCCCNNGGGAATT-3'. The sequence is that of Transcription factor COE2 (Ebf2) from Mus musculus (Mouse).